The primary structure comprises 831 residues: Pleckstrin homology-like domain family B member 1 (831 aa).

Positions 1-11 (LTLGARGRRTR) are enriched in basic residues. A disordered region spans residues 1 to 73 (LTLGARGRRT…PIPRERKNSI (73 aa)). Arginine 6 carries the post-translational modification Omega-N-methylarginine. Serine 12 and serine 14 each carry phosphoserine. Position 16 is a phosphothreonine (threonine 16). A phosphoserine mark is found at serine 27, serine 33, serine 45, serine 49, serine 57, serine 72, serine 77, and serine 175. Residues 39–51 (GSLTGASPRQSPH) are compositionally biased toward polar residues. Disordered regions lie at residues 160 to 209 (RSGE…LQGE) and 416 to 465 (NGDM…QNGT). The segment covering 174-188 (ESMERSDEENLKEEC) has biased composition (basic and acidic residues). Residues 180 to 306 (DEENLKEECS…TETKLFEDLE (127 aa)) adopt a coiled-coil conformation. 2 positions are modified to phosphoserine: serine 421 and serine 467. A compositionally biased stretch (low complexity) spans 421 to 442 (SPLPRTRSGPLPSSSGSSSSSS). A disordered region spans residues 584–603 (SMETSISTGGNSACSPDNMS). Residues 610–676 (MGKIEEMEKM…QQLVEKEVKL (67 aa)) are a coiled coil. The region spanning 721–824 (SKVCRGYLIK…WMDVIVTGAE (104 aa)) is the PH domain.

In Rattus norvegicus (Rat), this protein is Pleckstrin homology-like domain family B member 1 (Phldb1).